Here is a 380-residue protein sequence, read N- to C-terminus: Endo-polygalacturonase (380 aa).

The N-terminal stretch at 1-17 (MVHILSSALSLLRLGAA) is a signal peptide. Residues 18–42 (VSAAPAPAPTAAPNVADALAAVEKR) constitute a propeptide that is removed on maturation. The cysteines at positions 46 and 64 are disulfide-linked. 6 PbH1 repeats span residues 178–207 (ASGL…DVGS), 208–229 (STDI…AINS), 230–250 (GTGI…SIGS), 259–280 (VSDV…RIKT), 288–310 (VSGV…VIEQ), and 322–343 (TSGV…SSSA). The active-site Proton donor is the D222. An intrachain disulfide couples C224 to C240. H244 is an active-site residue. C350 and C353 are disulfide-bonded. Residue N361 is glycosylated (N-linked (GlcNAc...) asparagine). A disulfide bridge links C371 with C380.

Belongs to the glycosyl hydrolase 28 family.

The protein resides in the secreted. It carries out the reaction (1,4-alpha-D-galacturonosyl)n+m + H2O = (1,4-alpha-D-galacturonosyl)n + (1,4-alpha-D-galacturonosyl)m.. In Sclerotinia sclerotiorum (White mold), this protein is Endo-polygalacturonase (PG1).